The following is a 757-amino-acid chain: Exo-alpha-(1-&gt;6)-L-arabinopyranosidase (757 aa).

Asp-232 is a catalytic residue.

The protein belongs to the glycosyl hydrolase 3 family. Homotetramer.

With respect to regulation, completely inhibited by Cu(2+) and activated by Co(2+). Catalyzes the hydrolysis of a non-reducing terminal alpha-L-arabinopyranosidic linkage in ginsenoside Rb2 (alpha-L-arabinopyranosyl-(1-&gt;6)-alpha-D-glucopyranosyl) to release alpha-D-glucopyranosyl (Rd). It is not able to hydrolyze alpha-L-arabinofuranosyl-(1-&gt;6)-alpha-D-glucopyranosyl (Rc). This Bifidobacterium longum protein is Exo-alpha-(1-&gt;6)-L-arabinopyranosidase (apy).